The following is a 148-amino-acid chain: DNA-directed RNA polymerase II subunit GRINL1A, isoforms 4/5 (148 aa).

Residues 1-66 form a disordered region; it reads MATPARAPES…AEFGGAAGNV (66 aa). The span at 53 to 66 shows a compositional bias: low complexity; it reads GLGAAEFGGAAGNV.

The sequence is that of DNA-directed RNA polymerase II subunit GRINL1A, isoforms 4/5 (POLR2M) from Homo sapiens (Human).